A 42-amino-acid polypeptide reads, in one-letter code: Serine protease inhibitor 8 (42 aa).

Belongs to the protease inhibitor I3 (leguminous Kunitz-type inhibitor) family. In terms of tissue distribution, cortex of potato tuber.

Its function is as follows. Potent inhibitor of animal pancreatic trypsin (serine protease). The sequence is that of Serine protease inhibitor 8 from Solanum tuberosum (Potato).